A 172-amino-acid polypeptide reads, in one-letter code: MIDGDGYRLNVGIVICNNHGQVFWAKRYGQHSWQFPQGGIDEGETPEQAMYRELYEEVGLTKKDVKIVATSRHWLRYKLPKRLVRWDSKPVCIGQKQKWFLLRLDCDESHINMQRGSTPEFDGWRWVSYWYPVRQVVSFKRDVYRRAMKEFASLAMPFKERKTKGKRKLRRG.

Positions 6 to 149 (GYRLNVGIVI…KRDVYRRAMK (144 aa)) constitute a Nudix hydrolase domain. Residues 38-59 (GGIDEGETPEQAMYRELYEEVG) carry the Nudix box motif.

The protein belongs to the Nudix hydrolase family. RppH subfamily. A divalent metal cation serves as cofactor.

Its function is as follows. Accelerates the degradation of transcripts by removing pyrophosphate from the 5'-end of triphosphorylated RNA, leading to a more labile monophosphorylated state that can stimulate subsequent ribonuclease cleavage. The sequence is that of RNA pyrophosphohydrolase from Vibrio atlanticus (strain LGP32) (Vibrio splendidus (strain Mel32)).